An 871-amino-acid chain; its full sequence is Translation initiation factor IF-2 (871 aa).

The disordered stretch occupies residues 1–242 (MVDTKNPGDK…PAAKPAPAKQ (242 aa)). Positions 68–91 (PASARTPAAKAPPARAATPAAPRA) are enriched in low complexity. Residues 115 to 174 (AKVRAEEERRIAEAEAARRNSKEGIEQAEREAAEARRKAEEERHRQEEEAKRKAEIEAKR) show a composition bias toward basic and acidic residues. Low complexity-rich tracts occupy residues 182–206 (KPAP…AVAA) and 225–241 (ARPV…APAK). In terms of domain architecture, tr-type G spans 367 to 538 (PRSPVVTVMG…SLQADLLDLK (172 aa)). The interval 376 to 383 (GHVDHGKT) is G1. A GTP-binding site is contributed by 376-383 (GHVDHGKT). Positions 401–405 (GITQH) are G2. The tract at residues 424–427 (DTPG) is G3. Residues 424–428 (DTPGH) and 478–481 (NKID) contribute to the GTP site. The interval 478-481 (NKID) is G4. The interval 514 to 516 (SAK) is G5.

Belongs to the TRAFAC class translation factor GTPase superfamily. Classic translation factor GTPase family. IF-2 subfamily.

It is found in the cytoplasm. In terms of biological role, one of the essential components for the initiation of protein synthesis. Protects formylmethionyl-tRNA from spontaneous hydrolysis and promotes its binding to the 30S ribosomal subunits. Also involved in the hydrolysis of GTP during the formation of the 70S ribosomal complex. This is Translation initiation factor IF-2 from Nitrobacter winogradskyi (strain ATCC 25391 / DSM 10237 / CIP 104748 / NCIMB 11846 / Nb-255).